Here is a 169-residue protein sequence, read N- to C-terminus: Peptide deformylase (169 aa).

Fe cation contacts are provided by Cys-91 and His-133. Residue Glu-134 is part of the active site. His-137 serves as a coordination point for Fe cation.

The protein belongs to the polypeptide deformylase family. Requires Fe(2+) as cofactor.

It catalyses the reaction N-terminal N-formyl-L-methionyl-[peptide] + H2O = N-terminal L-methionyl-[peptide] + formate. Removes the formyl group from the N-terminal Met of newly synthesized proteins. Requires at least a dipeptide for an efficient rate of reaction. N-terminal L-methionine is a prerequisite for activity but the enzyme has broad specificity at other positions. This Erwinia tasmaniensis (strain DSM 17950 / CFBP 7177 / CIP 109463 / NCPPB 4357 / Et1/99) protein is Peptide deformylase.